A 581-amino-acid polypeptide reads, in one-letter code: Pyridine nucleotide-disulfide oxidoreductase domain-containing protein 2 (581 aa).

38–71 (VVIGAGHNGLVAAAYLQRLGVNTAVFERRHVIGG) lines the FAD pocket.

Belongs to the carotenoid/retinoid oxidoreductase family. In terms of assembly, interacts with COX5B; this interaction may contribute to localize PYROXD2 to the inner face of the inner mitochondrial membrane.

It localises to the mitochondrion matrix. Probable oxidoreductase that may play a role as regulator of mitochondrial function. The sequence is that of Pyridine nucleotide-disulfide oxidoreductase domain-containing protein 2 from Mus musculus (Mouse).